Reading from the N-terminus, the 356-residue chain is Histidinol-phosphate aminotransferase (356 aa).

An N6-(pyridoxal phosphate)lysine modification is found at lysine 214.

The protein belongs to the class-II pyridoxal-phosphate-dependent aminotransferase family. Histidinol-phosphate aminotransferase subfamily. As to quaternary structure, homodimer. The cofactor is pyridoxal 5'-phosphate.

The catalysed reaction is L-histidinol phosphate + 2-oxoglutarate = 3-(imidazol-4-yl)-2-oxopropyl phosphate + L-glutamate. It participates in amino-acid biosynthesis; L-histidine biosynthesis; L-histidine from 5-phospho-alpha-D-ribose 1-diphosphate: step 7/9. The polypeptide is Histidinol-phosphate aminotransferase (Escherichia coli (strain SMS-3-5 / SECEC)).